A 287-amino-acid polypeptide reads, in one-letter code: Ketoacyl reductase HetN (287 aa).

Residue 11–35 coordinates NAD(+); that stretch reads LTGASRGLGVYIARALAKEQATVVC. S142 contacts substrate. Y155 serves as the catalytic Proton acceptor.

It belongs to the short-chain dehydrogenases/reductases (SDR) family.

In terms of biological role, may be involved in repressing heterocyst differentiation and may be essential for preventing all vegetative cells from differentiating. In Nostoc sp. (strain PCC 7120 / SAG 25.82 / UTEX 2576), this protein is Ketoacyl reductase HetN (hetN).